The following is a 266-amino-acid chain: Indole-3-glycerol phosphate synthase (266 aa).

The protein belongs to the TrpC family.

It catalyses the reaction 1-(2-carboxyphenylamino)-1-deoxy-D-ribulose 5-phosphate + H(+) = (1S,2R)-1-C-(indol-3-yl)glycerol 3-phosphate + CO2 + H2O. Its pathway is amino-acid biosynthesis; L-tryptophan biosynthesis; L-tryptophan from chorismate: step 4/5. This Opitutus terrae (strain DSM 11246 / JCM 15787 / PB90-1) protein is Indole-3-glycerol phosphate synthase.